The sequence spans 325 residues: Retinal homeobox protein Rx-B (325 aa).

An Octapeptide motif motif is present at residues 32-39 (HSIEAILG). Residues 75–87 (TEEIHPQQEHLED) show a composition bias toward basic and acidic residues. Residues 75 to 136 (TEEIHPQQEH…KKKHRRNRTT (62 aa)) form a disordered region. Positions 99 to 117 (AKTSSECLSPGLSTSNSDN) are enriched in polar residues. The homeobox DNA-binding region spans 130–189 (HRRNRTTFTTYQLHELERAFEKSHYPDVYSREELAMKVNLPEVRVQVWFQNRRAKWRRQE). Residues 302–315 (NSIASLRMKAKEHI) carry the OAR motif. A Nuclear localization signal motif is present at residues 308-312 (RMKAK).

The protein belongs to the paired homeobox family. Bicoid subfamily. Highly expressed in anterior neural plate followed by neural retina, pigmented epithelium, in pineal gland, diencephalon floor and epiphysis. At later stages, the neuroretina remains the primary site of expression. No expression in the developing lens and cornea.

The protein resides in the nucleus. In terms of biological role, plays a critical role in eye formation by regulating the initial specification of retinal cells and/or their subsequent proliferation. In Xenopus laevis (African clawed frog), this protein is Retinal homeobox protein Rx-B (rax-b).